The following is a 291-amino-acid chain: 4-diphosphocytidyl-2-C-methyl-D-erythritol kinase (291 aa).

Lys12 is an active-site residue. 95-105 contacts ATP; the sequence is PDGGGLGGGSS. Asp137 is an active-site residue.

The protein belongs to the GHMP kinase family. IspE subfamily.

It catalyses the reaction 4-CDP-2-C-methyl-D-erythritol + ATP = 4-CDP-2-C-methyl-D-erythritol 2-phosphate + ADP + H(+). It participates in isoprenoid biosynthesis; isopentenyl diphosphate biosynthesis via DXP pathway; isopentenyl diphosphate from 1-deoxy-D-xylulose 5-phosphate: step 3/6. Functionally, catalyzes the phosphorylation of the position 2 hydroxy group of 4-diphosphocytidyl-2C-methyl-D-erythritol. In Alkalilimnicola ehrlichii (strain ATCC BAA-1101 / DSM 17681 / MLHE-1), this protein is 4-diphosphocytidyl-2-C-methyl-D-erythritol kinase.